We begin with the raw amino-acid sequence, 207 residues long: Large ribosomal subunit protein uL4 (207 aa).

The tract at residues 49–78 is disordered; the sequence is HAVKNRSAVSGGGRKPWRQKGTGRARQGSI.

The protein belongs to the universal ribosomal protein uL4 family. Part of the 50S ribosomal subunit.

Functionally, one of the primary rRNA binding proteins, this protein initially binds near the 5'-end of the 23S rRNA. It is important during the early stages of 50S assembly. It makes multiple contacts with different domains of the 23S rRNA in the assembled 50S subunit and ribosome. Forms part of the polypeptide exit tunnel. The chain is Large ribosomal subunit protein uL4 from Streptococcus pneumoniae serotype 19F (strain G54).